Consider the following 101-residue polypeptide: Large ribosomal subunit protein uL23 (101 aa).

Belongs to the universal ribosomal protein uL23 family. In terms of assembly, part of the 50S ribosomal subunit. Contacts protein L29, and trigger factor when it is bound to the ribosome.

In terms of biological role, one of the early assembly proteins it binds 23S rRNA. One of the proteins that surrounds the polypeptide exit tunnel on the outside of the ribosome. Forms the main docking site for trigger factor binding to the ribosome. The chain is Large ribosomal subunit protein uL23 from Rhodococcus jostii (strain RHA1).